Reading from the N-terminus, the 296-residue chain is CRISPR-associated endonuclease Cas1 2 (296 aa).

Residues Glu157, His224, and Asp237 each contribute to the Mn(2+) site.

Belongs to the CRISPR-associated endonuclease Cas1 family. Homodimer, forms a heterotetramer with a Cas2 homodimer. It depends on Mg(2+) as a cofactor. Requires Mn(2+) as cofactor.

CRISPR (clustered regularly interspaced short palindromic repeat), is an adaptive immune system that provides protection against mobile genetic elements (viruses, transposable elements and conjugative plasmids). CRISPR clusters contain spacers, sequences complementary to antecedent mobile elements, and target invading nucleic acids. CRISPR clusters are transcribed and processed into CRISPR RNA (crRNA). Acts as a dsDNA endonuclease. Involved in the integration of spacer DNA into the CRISPR cassette. In Chlorobaculum tepidum (strain ATCC 49652 / DSM 12025 / NBRC 103806 / TLS) (Chlorobium tepidum), this protein is CRISPR-associated endonuclease Cas1 2.